The primary structure comprises 362 residues: Histidinol-phosphate aminotransferase (362 aa).

K211 is modified (N6-(pyridoxal phosphate)lysine).

This sequence belongs to the class-II pyridoxal-phosphate-dependent aminotransferase family. Histidinol-phosphate aminotransferase subfamily. In terms of assembly, homodimer. Pyridoxal 5'-phosphate is required as a cofactor.

The catalysed reaction is L-histidinol phosphate + 2-oxoglutarate = 3-(imidazol-4-yl)-2-oxopropyl phosphate + L-glutamate. It participates in amino-acid biosynthesis; L-histidine biosynthesis; L-histidine from 5-phospho-alpha-D-ribose 1-diphosphate: step 7/9. In Serratia proteamaculans (strain 568), this protein is Histidinol-phosphate aminotransferase.